The sequence spans 704 residues: Elongation factor G (704 aa).

The 284-residue stretch at 8–291 (ANVRNIGIMA…AVIEYLPSPV (284 aa)) folds into the tr-type G domain. GTP-binding positions include 17–24 (AHIDAGKT), 90–94 (DTPGH), and 144–147 (NKMD).

It belongs to the TRAFAC class translation factor GTPase superfamily. Classic translation factor GTPase family. EF-G/EF-2 subfamily.

The protein localises to the cytoplasm. Catalyzes the GTP-dependent ribosomal translocation step during translation elongation. During this step, the ribosome changes from the pre-translocational (PRE) to the post-translocational (POST) state as the newly formed A-site-bound peptidyl-tRNA and P-site-bound deacylated tRNA move to the P and E sites, respectively. Catalyzes the coordinated movement of the two tRNA molecules, the mRNA and conformational changes in the ribosome. The chain is Elongation factor G from Chlorobium phaeobacteroides (strain BS1).